Reading from the N-terminus, the 348-residue chain is 4-hydroxy-2-oxovalerate aldolase 2 (348 aa).

Positions 5-256 (LQICDSTLRD…EARIKLFDAL (252 aa)) constitute a Pyruvate carboxyltransferase domain. 13 to 14 (RD) contacts substrate. Position 14 (Asp-14) interacts with Mn(2+). His-17 serves as the catalytic Proton acceptor. Substrate-binding residues include Ser-168 and His-195. Residues His-195 and His-197 each coordinate Mn(2+).

The protein belongs to the 4-hydroxy-2-oxovalerate aldolase family.

The enzyme catalyses (S)-4-hydroxy-2-oxopentanoate = acetaldehyde + pyruvate. The sequence is that of 4-hydroxy-2-oxovalerate aldolase 2 from Salinispora arenicola (strain CNS-205).